A 119-amino-acid chain; its full sequence is Large ribosomal subunit protein bL20 (119 aa).

The protein belongs to the bacterial ribosomal protein bL20 family.

Binds directly to 23S ribosomal RNA and is necessary for the in vitro assembly process of the 50S ribosomal subunit. It is not involved in the protein synthesizing functions of that subunit. This chain is Large ribosomal subunit protein bL20, found in Latilactobacillus sakei subsp. sakei (strain 23K) (Lactobacillus sakei subsp. sakei).